A 57-amino-acid chain; its full sequence is Potassium channel toxin alpha-KTx 8.8 (57 aa).

The first 19 residues, 1 to 19, serve as a signal peptide directing secretion; that stretch reads MCRLYAIILIVLVMNVIMT. The propeptide occupies 20-28; the sequence is IIPDSKVEV. Disulfide bonds link Cys31–Cys47, Cys34–Cys52, and Cys38–Cys54.

Belongs to the short scorpion toxin superfamily. Potassium channel inhibitor family. Alpha-KTx 08 subfamily. Post-translationally, contains 3 disulfide bonds. As to expression, expressed by the venom gland.

The protein localises to the secreted. In terms of biological role, selectively inhibits voltage-gated potassium channels rKv1.2/KCNA2 (IC(50)=331 nM) and hKv1.3/KCNA3 (IC(50)=503 nM). Partially inihibts rKv1.6/KCNA6 (IC(50)=9983 nM). This chain is Potassium channel toxin alpha-KTx 8.8, found in Orthochirus scrobiculosus (Central Asian scorpion).